The chain runs to 548 residues: Mercuric reductase (548 aa).

The HMA domain maps to 1–65; that stretch reads MTEITVNGMT…AIAALGYQGS (65 aa). 2 residues coordinate a metal cation: C11 and C14. The FAD site is built by A97, G117, and T122. A disulfide bridge links C123 with C128. FAD is bound by residues K132, A198, D390, and V398. Hg(2+) contacts are provided by C545 and C546.

Belongs to the class-I pyridine nucleotide-disulfide oxidoreductase family. In terms of assembly, homodimer. Requires FAD as cofactor.

The catalysed reaction is Hg + NADP(+) + H(+) = Hg(2+) + NADPH. Its function is as follows. Resistance to Hg(2+) in bacteria appears to be governed by a specialized system which includes mercuric reductase. MerA protein is responsible for volatilizing mercury as Hg(0). The protein is Mercuric reductase (merA) of Pseudomonas fluorescens.